The sequence spans 494 residues: Cytochrome P450 2B11 (494 aa).

Phosphoserine; by PKA is present on Ser-128. Heme is bound at residue Cys-436.

It belongs to the cytochrome P450 family. Heme serves as cofactor.

Its subcellular location is the endoplasmic reticulum membrane. It is found in the microsome membrane. It catalyses the reaction an organic molecule + reduced [NADPH--hemoprotein reductase] + O2 = an alcohol + oxidized [NADPH--hemoprotein reductase] + H2O + H(+). In terms of biological role, cytochromes P450 are a group of heme-thiolate monooxygenases. In liver microsomes, this enzyme is involved in an NADPH-dependent electron transport pathway. This isozyme seems responsible for metabolism of 2,2',4,4',5,5'-hexachlorobiphenyl. In Canis lupus familiaris (Dog), this protein is Cytochrome P450 2B11 (CYP2B11).